Consider the following 112-residue polypeptide: MNSSPGPAIALFLMFGGINGDSVVQTEGQVLPSEGDSLIVNCSYETTQYPSLFWYVQYPGEGPQLHLKAMKANDKGRNKGFEAMYRKETTSFHLEKDSVQESDSAVYFCALS.

Positions 1-20 (MNSSPGPAIALFLMFGGING) are cleaved as a signal peptide. The Ig-like domain maps to 21–112 (DSVVQTEGQV…DSAVYFCALS (92 aa)). Asn-41 is a glycosylation site (N-linked (GlcNAc...) asparagine). Cys-42 and Cys-109 are oxidised to a cystine.

As to quaternary structure, alpha-beta TR is a heterodimer composed of an alpha and beta chain; disulfide-linked. The alpha-beta TR is associated with the transmembrane signaling CD3 coreceptor proteins to form the TR-CD3 (TcR or TCR). The assembly of alpha-beta TR heterodimers with CD3 occurs in the endoplasmic reticulum where a single alpha-beta TR heterodimer associates with one CD3D-CD3E heterodimer, one CD3G-CD3E heterodimer and one CD247 homodimer forming a stable octameric structure. CD3D-CD3E and CD3G-CD3E heterodimers preferentially associate with TR alpha and TR beta chains, respectively. The association of the CD247 homodimer is the last step of TcR assembly in the endoplasmic reticulum and is required for transport to the cell surface.

It is found in the cell membrane. V region of the variable domain of T cell receptor (TR) alpha chain that participates in the antigen recognition. Alpha-beta T cell receptors are antigen specific receptors which are essential to the immune response and are present on the cell surface of T lymphocytes. Recognize peptide-major histocompatibility (MH) (pMH) complexes that are displayed by antigen presenting cells (APC), a prerequisite for efficient T cell adaptive immunity against pathogens. Binding of alpha-beta TR to pMH complex initiates TR-CD3 clustering on the cell surface and intracellular activation of LCK that phosphorylates the ITAM motifs of CD3G, CD3D, CD3E and CD247 enabling the recruitment of ZAP70. In turn ZAP70 phosphorylates LAT, which recruits numerous signaling molecules to form the LAT signalosome. The LAT signalosome propagates signal branching to three major signaling pathways, the calcium, the mitogen-activated protein kinase (MAPK) kinase and the nuclear factor NF-kappa-B (NF-kB) pathways, leading to the mobilization of transcription factors that are critical for gene expression and essential for T cell growth and differentiation. The T cell repertoire is generated in the thymus, by V-(D)-J rearrangement. This repertoire is then shaped by intrathymic selection events to generate a peripheral T cell pool of self-MH restricted, non-autoaggressive T cells. Post-thymic interaction of alpha-beta TR with the pMH complexes shapes TR structural and functional avidity. This Homo sapiens (Human) protein is T cell receptor alpha variable 9-1.